Reading from the N-terminus, the 132-residue chain is Profilin-1 (132 aa).

It belongs to the profilin family. As to quaternary structure, occurs in many kinds of cells as a complex with monomeric actin in a 1:1 ratio.

The protein localises to the cytoplasm. The protein resides in the cytoskeleton. Binds to actin and affects the structure of the cytoskeleton. At high concentrations, profilin prevents the polymerization of actin, whereas it enhances it at low concentrations. By binding to PIP2, it inhibits the formation of IP3 and DG. This is Profilin-1 (PRO1) from Parietaria judaica (Pellitory-of-the-wall).